Reading from the N-terminus, the 269-residue chain is Type 4 prepilin-like proteins leader peptide-processing enzyme (269 aa).

7 consecutive transmembrane segments (helical) span residues 13–33 (MPVL…VVIW), 102–122 (YPLV…VWPE), 124–144 (GWAL…VIDL), 147–167 (QWLP…AAWA), 178–198 (VTGV…AGIV), 210–230 (LLFA…VALI), and 249–269 (LPFG…QALF).

The protein belongs to the peptidase A24 family.

Its subcellular location is the cell inner membrane. The catalysed reaction is Typically cleaves a -Gly-|-Phe- bond to release an N-terminal, basic peptide of 5-8 residues from type IV prepilin, and then N-methylates the new N-terminal amino group, the methyl donor being S-adenosyl-L-methionine.. Its function is as follows. Cleaves type-4 fimbrial leader sequence and methylates the N-terminal (generally Phe) residue. This chain is Type 4 prepilin-like proteins leader peptide-processing enzyme, found in Escherichia coli O78:H11 (strain H10407 / ETEC).